The primary structure comprises 673 residues: Forkhead box protein O3 (673 aa).

Residues 1 to 153 form a disordered region; that stretch reads MAEAPASPAP…SGQPRKCSSR (153 aa). Position 30 is a phosphoserine; by AMPK (Ser30). A Phosphothreonine; by PKB/AKT1 modification is found at Thr32. Residue Lys46 is modified to N6-methyllysine. The span at 57-68 shows a compositional bias: acidic residues; that stretch reads IPEEEDDEDDED. The span at 79–89 shows a compositional bias: gly residues; sequence IGGGGGSGTLG. The tract at residues 80–108 is required for mitochondrial import; that stretch reads GGGGGSGTLGSGLLLEDSARVLAPGGQDP. Lys149 carries the post-translational modification N6-methyllysine. The fork-head DNA-binding region spans 157-251; that stretch reads WGNLSYADLI…KSGKAPRRRA (95 aa). Phosphothreonine; by AMPK is present on Thr179. The residue at position 209 (Ser209) is a Phosphoserine; by STK4/MST1. Position 215 is a phosphoserine; by MAPKAPK5 (Ser215). Lys230 carries the N6-methyllysine modification. The disordered stretch occupies residues 231-302; it reads SSWWIINPDG…GSPTSRSSDE (72 aa). Position 242 is an N6-acetyllysine (Lys242). The Nuclear localization signal motif lies at 242-259; sequence KSGKAPRRRAVSMDNSNK. At Ser253 the chain carries Phosphoserine; by PKB/AKT1 and MAPKAPK5. The span at 261 to 272 shows a compositional bias: basic residues; it reads TKSRGRAAKKKA. N6-methyllysine occurs at positions 262 and 271. Phosphoserine occurs at positions 280 and 284. Polar residues predominate over residues 283–298; that stretch reads DSPSQLSKWPGSPTSR. Lys290 carries the N6-methyllysine modification. Position 294 is a phosphoserine (Ser294). Position 299 is a phosphoserine; by CaMK2A (Ser299). A mediates interaction with CHUK/IKKA and IKBKB/IKKB region spans residues 300 to 673; it reads SDELDAWTDF…QASSQSWVPG (374 aa). Ser311 carries the phosphoserine modification. Ser315 bears the Phosphoserine; by SGK1 mark. Residues Ser399 and Ser413 each carry the phosphoserine; by AMPK modification. Lys419 carries the post-translational modification N6-methyllysine. Ser421 is modified (phosphoserine). The tract at residues 536–587 is disordered; the sequence is HQHQTQGALGGSRALSNSVSNMGLSESSSLGSAKHQQQSPVSQSMQTLSDSL. The segment covering 549 to 582 has biased composition (polar residues); it reads ALSNSVSNMGLSESSSLGSAKHQQQSPVSQSMQT. The residue at position 551 (Ser551) is a Phosphoserine; by MAPKAPK5. Ser555 is subject to Phosphoserine; by AMPK and MAPKAPK5. A phosphoserine; by AMPK mark is found at Ser588 and Ser626. Phosphoserine; by IKKB is present on Ser644.

Upon metabolic stress, forms a complex composed of FOXO3, SIRT3 and mitochondrial RNA polymerase POLRMT; the complex is recruited to mtDNA in a SIRT3-dependent manner. Also forms a complex composed of FOXO3, SIRT3, TFAM and POLRMT. Interacts with SIRT2; the interaction occurs independently of SIRT2 deacetylase activity. Interacts with YWHAB/14-3-3-beta and YWHAZ/14-3-3-zeta, which are required for cytosolic sequestration. Upon oxidative stress, interacts with STK4/MST1, which disrupts interaction with YWHAB/14-3-3-beta and leads to nuclear translocation. Interacts with PIM1. Interacts with DDIT3/CHOP. Interacts (deacetylated form) with SKP2. Interacts with CHUK and IKBKB. Interacts with CAMK2A, CAMK2B and calcineurin A. Interacts with NUPR1; this interaction represses FOXO3 transactivation. In terms of processing, in the presence of survival factors such as IGF1, phosphorylated on Thr-32 and Ser-253 by AKT1/PKB. This phosphorylated form then interacts with 14-3-3 proteins and is retained in the cytoplasm. Survival factor withdrawal induces dephosphorylation and promotes translocation to the nucleus where the dephosphorylated protein induces transcription of target genes and triggers apoptosis. Although AKT1/PKB doesn't appear to phosphorylate Ser-315 directly, it may activate other kinases that trigger phosphorylation at this residue. Phosphorylated by STK4/MST1 on Ser-209 upon oxidative stress, which leads to dissociation from YWHAB/14-3-3-beta and nuclear translocation. Phosphorylated by PIM1. Phosphorylation by AMPK leads to the activation of transcriptional activity without affecting subcellular localization. In response to metabolic stress, phosphorylated by AMPK on Ser-30 which mediates FOXO3 mitochondrial translocation. Phosphorylation by MAPKAPK5 promotes nuclear localization and DNA-binding, leading to induction of miR-34b and miR-34c expression, 2 post-transcriptional regulators of MYC that bind to the 3'UTR of MYC transcript and prevent its translation. Phosphorylated by CHUK/IKKA and IKBKB/IKKB. TNF-induced inactivation of FOXO3 requires its phosphorylation at Ser-644 by IKBKB/IKKB which promotes FOXO3 retention in the cytoplasm, polyubiquitination and ubiquitin-mediated proteasomal degradation. May be dephosphorylated by calcineurin A on Ser-299 which abolishes FOXO3 transcriptional activity. In cancer cells, ERK mediated-phosphorylation of Ser-12 is required for mitochondrial translocation of FOXO3 in response to metabolic stress or chemotherapeutic agents. Phosphorylation at Ser-253 promotes its degradation by the proteasome. Dephosphorylation at Ser-253 by protein phosphatase 2A (PPP2CA) promotes its stabilization; interaction with PPP2CA is enhanced by AMBRA1. Post-translationally, deacetylation by SIRT1 or SIRT2 stimulates interaction of FOXO3 with SKP2 and facilitates SCF(SKP2)-mediated FOXO3 ubiquitination and proteasomal degradation. Deacetylation by SIRT2 stimulates FOXO3-mediated transcriptional activity in response to oxidative stress. Deacetylated by SIRT3. Deacetylation by SIRT3 stimulates FOXO3-mediated mtDNA transcriptional activity in response to metabolic stress. Heavily methylated by SET9 which decreases stability, while moderately increasing transcriptional activity. The main methylation site is Lys-271. Methylation doesn't affect subcellular location. In terms of processing, polyubiquitinated. Ubiquitinated by a SCF complex containing SKP2, leading to proteasomal degradation. Post-translationally, the N-terminus is cleaved following import into the mitochondrion. In terms of tissue distribution, ubiquitous.

Its subcellular location is the cytoplasm. It is found in the cytosol. It localises to the nucleus. The protein localises to the mitochondrion matrix. The protein resides in the mitochondrion outer membrane. Functionally, transcriptional activator that recognizes and binds to the DNA sequence 5'-[AG]TAAA[TC]A-3' and regulates different processes, such as apoptosis and autophagy. Acts as a positive regulator of autophagy in skeletal muscle: in starved cells, enters the nucleus following dephosphorylation and binds the promoters of autophagy genes, such as GABARAP1L, MAP1LC3B and ATG12, thereby activating their expression, resulting in proteolysis of skeletal muscle proteins. Triggers apoptosis in the absence of survival factors, including neuronal cell death upon oxidative stress. Participates in post-transcriptional regulation of MYC: following phosphorylation by MAPKAPK5, promotes induction of miR-34b and miR-34c expression, 2 post-transcriptional regulators of MYC that bind to the 3'UTR of MYC transcript and prevent its translation. In response to metabolic stress, translocates into the mitochondria where it promotes mtDNA transcription. In response to metabolic stress, translocates into the mitochondria where it promotes mtDNA transcription. Also acts as a key regulator of chondrogenic commitment of skeletal progenitor cells in response to lipid availability: when lipids levels are low, translocates to the nucleus and promotes expression of SOX9, which induces chondrogenic commitment and suppresses fatty acid oxidation. Also acts as a key regulator of regulatory T-cells (Treg) differentiation by activating expression of FOXP3. In Homo sapiens (Human), this protein is Forkhead box protein O3.